We begin with the raw amino-acid sequence, 355 residues long: MRVLLVKTSSLGDVIHTLPALTDAARAIPGIQFDWVVEEGFAEIPAWHPAVARVIPVAIRRWRKNLWQTLRNGEWRRFKQRLKEVDYDLVIDAQGLLKSAWLTRYVGKTPVAGLDRDSAREPLASRFYRRAYPVAWGQHAVERTRQLFAQALDYPLPESVGDYGLDREQLADADPGAPYLVFLHGTTWVTKHWPEAYWRELAERMCERGWSVRLPWGSAAERERAGRLAAGLENAAVLPRLSLAGMAKVLAGARACVAVDTGLGHLAAALDVPTLSLFGPTNPGFTGAYGRSQVHLGSDFPCAPCLKKTCTYQPTEEDRKLFDLKREQPLCFTRLNPQRVATQLEAMLLAPETLR.

ADP-L-glycero-beta-D-manno-heptose contacts are provided by T186, T187, K191, E221, D260, T261, G262, and H265.

The protein belongs to the glycosyltransferase 9 family.

It localises to the cell inner membrane. It catalyses the reaction an alpha-Kdo-(2-&gt;4)-alpha-Kdo-(2-&gt;6)-lipid A + ADP-L-glycero-beta-D-manno-heptose = an L-alpha-D-Hep-(1-&gt;5)-[alpha-Kdo-(2-&gt;4)]-alpha-Kdo-(2-&gt;6)-lipid A + ADP + H(+). Its pathway is bacterial outer membrane biogenesis; LPS core biosynthesis. Functionally, glycosyltransferase involved in the biosynthesis of the core oligosaccharide region of lipopolysaccharide (LPS). Catalyzes the addition of the first heptose unit to one 3-deoxy-D-manno-octulosonic acid (Kdo) residue of the Kdo2-lipid A module. This chain is Lipopolysaccharide heptosyltransferase 1, found in Pseudomonas aeruginosa (strain ATCC 15692 / DSM 22644 / CIP 104116 / JCM 14847 / LMG 12228 / 1C / PRS 101 / PAO1).